Consider the following 222-residue polypeptide: NADH dehydrogenase [ubiquinone] iron-sulfur protein 8-B, mitochondrial (222 aa).

4Fe-4S ferredoxin-type domains lie at 114–143 (RRYP…IEAE) and 153–182 (TRYD…EGPN). [4Fe-4S] cluster is bound by residues Cys123, Cys126, Cys129, Cys133, Cys162, Cys165, Cys168, and Cys172.

It belongs to the complex I 23 kDa subunit family. In terms of assembly, complex I is composed of at least 49 different subunits. This is a component of the iron-sulfur (IP) fragment of the enzyme. Requires [4Fe-4S] cluster as cofactor.

The protein resides in the mitochondrion. It catalyses the reaction a ubiquinone + NADH + 5 H(+)(in) = a ubiquinol + NAD(+) + 4 H(+)(out). Functionally, core subunit of the mitochondrial membrane respiratory chain NADH dehydrogenase (Complex I) that is believed to belong to the minimal assembly required for catalysis. Complex I functions in the transfer of electrons from NADH to the respiratory chain. The immediate electron acceptor for the enzyme is believed to be ubiquinone. May donate electrons to ubiquinone. The chain is NADH dehydrogenase [ubiquinone] iron-sulfur protein 8-B, mitochondrial from Arabidopsis thaliana (Mouse-ear cress).